The following is a 155-amino-acid chain: Transcription antitermination protein NusB (155 aa).

It belongs to the NusB family.

Involved in transcription antitermination. Required for transcription of ribosomal RNA (rRNA) genes. Binds specifically to the boxA antiterminator sequence of the ribosomal RNA (rrn) operons. This Mesorhizobium japonicum (strain LMG 29417 / CECT 9101 / MAFF 303099) (Mesorhizobium loti (strain MAFF 303099)) protein is Transcription antitermination protein NusB.